Here is a 637-residue protein sequence, read N- to C-terminus: Chaperone protein DnaK (637 aa).

Threonine 198 is subject to Phosphothreonine; by autocatalysis. Residues 597–637 (MYQQQAEGDAARDAAQDAAKDDVVDAEFTEVDDDKNDKKSA) form a disordered region. The span at 605-619 (DAARDAAQDAAKDDV) shows a compositional bias: basic and acidic residues. Acidic residues predominate over residues 620–630 (VDAEFTEVDDD).

It belongs to the heat shock protein 70 family.

Its function is as follows. Acts as a chaperone. The protein is Chaperone protein DnaK of Afipia carboxidovorans (strain ATCC 49405 / DSM 1227 / KCTC 32145 / OM5) (Oligotropha carboxidovorans).